We begin with the raw amino-acid sequence, 471 residues long: Putative multidrug resistance protein MdtD (471 aa).

Over 1 to 11 (MTDLPDSTRWQ) the chain is Periplasmic. Residues 12–32 (LWIVAFGFFMQSLDTTIVNTA) traverse the membrane as a helical segment. Residues 33–48 (LPSMAQSLGESPLHMH) lie on the Cytoplasmic side of the membrane. A helical transmembrane segment spans residues 49-69 (MVIVSYVLTVAVMLPASGWLA). The Periplasmic portion of the chain corresponds to 70 to 76 (DKVGVRN). A helical transmembrane segment spans residues 77–97 (IFFTAIVLFTLGSLFCALSGT). Over 98 to 101 (LNEL) the chain is Cytoplasmic. The helical transmembrane segment at 102 to 124 (LLARALQGVGGAMMVPVGRLTVM) threads the bilayer. At 125–137 (KIVPREQYMAAMT) the chain is on the periplasmic side. The helical transmembrane segment at 138–158 (FVTLPGQVGPLLGPALGGLLV) threads the bilayer. Residues 159–164 (EYASWH) are Cytoplasmic-facing. The chain crosses the membrane as a helical span at residues 165–185 (WIFLINIPVGIIGAIATLLLM). At 186–196 (PNYTMQTRRFD) the chain is on the periplasmic side. Residues 197-217 (LSGFLLLAVGMAVLTLALDGS) traverse the membrane as a helical segment. Over 218 to 224 (KGTGLSP) the chain is Cytoplasmic. A helical transmembrane segment spans residues 225–245 (LTIAGLVAVGVVALVLYLLHA). Residues 246-262 (RNNNRALFSLKLFRTRT) are Periplasmic-facing. Residues 263-283 (FSLGLAGSFAGRIGSGMLPFM) form a helical membrane-spanning segment. Residues 284–285 (TP) lie on the Cytoplasmic side of the membrane. A helical transmembrane segment spans residues 286–306 (VFLQIGLGFSPFHAGLMMIPM). Topologically, residues 307 to 341 (VLGSMGMKRIVVQVVNRFGYRRVLVATTLGLSLVT) are periplasmic. The helical transmembrane segment at 342–362 (LLFMTTALLGWYYVLPFVLFL) threads the bilayer. At 363–395 (QGMVNSTRFSSMNTLTLKDLPDNLASSGNSLLS) the chain is on the cytoplasmic side. Residues 396-416 (MIMQLSMSIGVTIAGLLLGLF) traverse the membrane as a helical segment. Residues 417–430 (GSQHVSVDSGTTQT) lie on the Periplasmic side of the membrane. A helical membrane pass occupies residues 431 to 451 (VFMYTWLSMALIIALPAFIFA). Residues 452-471 (RVPNDTHQNVAISRRKRSAQ) are Cytoplasmic-facing.

The protein belongs to the major facilitator superfamily. TCR/Tet family.

The protein resides in the cell inner membrane. The polypeptide is Putative multidrug resistance protein MdtD (Escherichia coli (strain K12 / MC4100 / BW2952)).